A 56-amino-acid polypeptide reads, in one-letter code: Cruciferin (56 aa).

Thr-45 bears the Phosphothreonine mark.

This sequence belongs to the 11S seed storage protein (globulins) family. In terms of assembly, hexamer; each subunit is composed of an acidic and a basic chain derived from a single precursor and linked by a disulfide bond.

This is a seed storage protein. The chain is Cruciferin from Sinapis alba (White mustard).